We begin with the raw amino-acid sequence, 187 residues long: Elongation factor P (187 aa).

The protein belongs to the elongation factor P family.

It localises to the cytoplasm. It participates in protein biosynthesis; polypeptide chain elongation. Involved in peptide bond synthesis. Stimulates efficient translation and peptide-bond synthesis on native or reconstituted 70S ribosomes in vitro. Probably functions indirectly by altering the affinity of the ribosome for aminoacyl-tRNA, thus increasing their reactivity as acceptors for peptidyl transferase. The protein is Elongation factor P of Desulfosudis oleivorans (strain DSM 6200 / JCM 39069 / Hxd3) (Desulfococcus oleovorans).